Here is a 295-residue protein sequence, read N- to C-terminus: 4-hydroxy-tetrahydrodipicolinate synthase 1 (295 aa).

Pyruvate is bound at residue Thr-46. Tyr-134 serves as the catalytic Proton donor/acceptor. Lys-162 acts as the Schiff-base intermediate with substrate in catalysis. Val-204 contributes to the pyruvate binding site.

The protein belongs to the DapA family. Homotetramer; dimer of dimers.

The protein localises to the cytoplasm. It catalyses the reaction L-aspartate 4-semialdehyde + pyruvate = (2S,4S)-4-hydroxy-2,3,4,5-tetrahydrodipicolinate + H2O + H(+). It participates in amino-acid biosynthesis; L-lysine biosynthesis via DAP pathway; (S)-tetrahydrodipicolinate from L-aspartate: step 3/4. Its function is as follows. Catalyzes the condensation of (S)-aspartate-beta-semialdehyde [(S)-ASA] and pyruvate to 4-hydroxy-tetrahydrodipicolinate (HTPA). In Halalkalibacterium halodurans (strain ATCC BAA-125 / DSM 18197 / FERM 7344 / JCM 9153 / C-125) (Bacillus halodurans), this protein is 4-hydroxy-tetrahydrodipicolinate synthase 1.